A 114-amino-acid polypeptide reads, in one-letter code: UPF0342 protein SH1117 (114 aa).

The protein belongs to the UPF0342 family.

The sequence is that of UPF0342 protein SH1117 from Staphylococcus haemolyticus (strain JCSC1435).